We begin with the raw amino-acid sequence, 197 residues long: ATP-dependent Clp protease proteolytic subunit (197 aa).

Ser-98 acts as the Nucleophile in catalysis. His-123 is a catalytic residue.

Belongs to the peptidase S14 family. As to quaternary structure, fourteen ClpP subunits assemble into 2 heptameric rings which stack back to back to give a disk-like structure with a central cavity, resembling the structure of eukaryotic proteasomes.

It localises to the cytoplasm. The catalysed reaction is Hydrolysis of proteins to small peptides in the presence of ATP and magnesium. alpha-casein is the usual test substrate. In the absence of ATP, only oligopeptides shorter than five residues are hydrolyzed (such as succinyl-Leu-Tyr-|-NHMec, and Leu-Tyr-Leu-|-Tyr-Trp, in which cleavage of the -Tyr-|-Leu- and -Tyr-|-Trp bonds also occurs).. Its function is as follows. Cleaves peptides in various proteins in a process that requires ATP hydrolysis. Has a chymotrypsin-like activity. Plays a major role in the degradation of misfolded proteins. This is ATP-dependent Clp protease proteolytic subunit from Anaplasma phagocytophilum (strain HZ).